Reading from the N-terminus, the 347-residue chain is Melanoma-associated antigen B10 (347 aa).

Basic residues predominate over residues Met1–Ala18. Disordered regions lie at residues Met1 to Gly20 and Gly56 to Glu92. The span at Ala67–Ser78 shows a compositional bias: low complexity. Residues Arg81–Glu92 show a composition bias toward basic and acidic residues. One can recognise an MAGE domain in the interval Val111–Ala310. The tract at residues Val328–Gln347 is disordered.

This Homo sapiens (Human) protein is Melanoma-associated antigen B10 (MAGEB10).